Consider the following 859-residue polypeptide: Probable helicase A859L (859 aa).

One can recognise a Helicase ATP-binding domain in the interval 178–349 (YQELRRSGRA…KNRELFGGVA (172 aa)). Residue 191–198 (MACRCGKT) participates in ATP binding. The short motif at 298 to 301 (DECH) is the DEAH box element. One can recognise a Helicase C-terminal domain in the interval 401 to 553 (HLKTNITAPK…RFYEHLLNPS (153 aa)).

It belongs to the asfivirus helicase A859L family.

The chain is Probable helicase A859L from African swine fever virus (isolate Tick/South Africa/Pretoriuskop Pr4/1996) (ASFV).